We begin with the raw amino-acid sequence, 168 residues long: Thiol peroxidase (168 aa).

Positions 19-168 (PQAGSKAQAF…YDAALNVLKA (150 aa)) constitute a Thioredoxin domain. Residue Cys-61 is the Cysteine sulfenic acid (-SOH) intermediate of the active site. A disulfide bond links Cys-61 and Cys-95.

It belongs to the peroxiredoxin family. Tpx subfamily. As to quaternary structure, homodimer.

It carries out the reaction a hydroperoxide + [thioredoxin]-dithiol = an alcohol + [thioredoxin]-disulfide + H2O. Thiol-specific peroxidase that catalyzes the reduction of hydrogen peroxide and organic hydroperoxides to water and alcohols, respectively. Plays a role in cell protection against oxidative stress by detoxifying peroxides. The sequence is that of Thiol peroxidase from Salmonella typhimurium (strain LT2 / SGSC1412 / ATCC 700720).